Here is a 477-residue protein sequence, read N- to C-terminus: Cytoplasmic 60S subunit biogenesis factor ZNF622 (477 aa).

Position 2 is an N-acetylalanine (Ala2). U1-type zinc fingers lie at residues 4–28 (YTCITCRVAFRDADMQRAHYKTDWH) and 67–91 (TYCTVCSKKFASFNAYENHLKSRRH). The interval 135–212 (AIKAQPSMSP…EDLDGDDWED (78 aa)) is disordered. Positions 167-178 (GTHDRDPSEKPP) are enriched in basic and acidic residues. Residues 196–212 (EDSEEEEEDLDGDDWED) show a composition bias toward acidic residues. Ser276 carries the post-translational modification Phosphoserine.

The protein belongs to the REI1 family. In terms of assembly, homo- and heterodimer. Associates with pre-60S ribosomal particles. Interacts with MELK and MYBL2. Interacts with DNAJC21. In terms of processing, phosphorylated by MELK. The phosphorylation may redirect the protein to the nucleus. Ubiquitinated by HECTD1, leading to its degradation. In terms of tissue distribution, expressed in lung, kidney, spleen, liver and brain with lowest expression in kidney.

It is found in the cytoplasm. It localises to the nucleus. In terms of biological role, pre-60S-associated cytoplasmic factor involved in the cytoplasmic maturation of the 60S subunit. The chain is Cytoplasmic 60S subunit biogenesis factor ZNF622 from Homo sapiens (Human).